The chain runs to 1343 residues: DNA-directed RNA polymerase subunit beta (1343 aa).

This sequence belongs to the RNA polymerase beta chain family. As to quaternary structure, the RNAP catalytic core consists of 2 alpha, 1 beta, 1 beta' and 1 omega subunit. When a sigma factor is associated with the core the holoenzyme is formed, which can initiate transcription.

The enzyme catalyses RNA(n) + a ribonucleoside 5'-triphosphate = RNA(n+1) + diphosphate. In terms of biological role, DNA-dependent RNA polymerase catalyzes the transcription of DNA into RNA using the four ribonucleoside triphosphates as substrates. In Shewanella baltica (strain OS155 / ATCC BAA-1091), this protein is DNA-directed RNA polymerase subunit beta.